Reading from the N-terminus, the 207-residue chain is MSKLKIDTKRRFSLLIALVLIISLSSCATTQTNVTTKTVFNQETTYHNLLKLKKWQANGVIGIIYDNQAESANYTYLQDGDNFSIKLYGPLGIGSIEIKGDTNSVSLANSKGQKLTAKDAKTLMLEQLGWYVPVEGLKYWIKAIAIPNIRQTSELNTNNLLSKLSQNGWSISYSNYQLVDSKYPLPTKIRMSRDNLTLKIVIKSWQI.

The signal sequence occupies residues 1 to 26 (MSKLKIDTKRRFSLLIALVLIISLSS). A lipid anchor (N-palmitoyl cysteine) is attached at Cys-27. Cys-27 carries S-diacylglycerol cysteine lipidation.

It belongs to the LolB family. Monomer.

The protein resides in the cell outer membrane. In terms of biological role, plays a critical role in the incorporation of lipoproteins in the outer membrane after they are released by the LolA protein. In Francisella tularensis subsp. tularensis (strain WY96-3418), this protein is Outer-membrane lipoprotein LolB.